The chain runs to 153 residues: Large ribosomal subunit protein uL15 (153 aa).

A disordered region spans residues 15–42 (ARRIVGRGSSSGRGTTSGRGTKGQQARA). Over residues 23–35 (SSSGRGTTSGRGT) the composition is skewed to gly residues.

The protein belongs to the universal ribosomal protein uL15 family. As to quaternary structure, part of the 50S ribosomal subunit.

Functionally, binds to the 23S rRNA. This is Large ribosomal subunit protein uL15 from Treponema pallidum (strain Nichols).